The chain runs to 477 residues: Shikimate biosynthesis protein AroDE (477 aa).

Positions 1–209 (MLCATVSGPS…LEELLSYNYS (209 aa)) are 3-dehydroquinate dehydratase. 3-dehydroquinate-binding positions include Ser-21, 29-31 (ELR), and 56-58 (TFR). His-111 acts as the Proton donor/acceptor; for 3-dehydroquinate dehydratase activity in catalysis. Residue Lys-134 is the Schiff-base intermediate with substrate; for 3-dehydroquinate dehydratase activity of the active site. Arg-172 and Gln-197 together coordinate 3-dehydroquinate. The shikimate 5-dehydrogenase stretch occupies residues 210 to 477 (KLSEKSHIYG…NYVKNFMAKV (268 aa)). 228–230 (SIS) lines the shikimate pocket. Lys-279 (proton acceptor; for shikimate dehydrogenase activity) is an active-site residue. Shikimate-binding residues include Asn-300 and Asp-315. NADP(+) is bound by residues 339 to 343 (GAGGA), 362 to 364 (NRT), and Gly-438. Gln-445 lines the shikimate pocket.

The protein in the N-terminal section; belongs to the type-I 3-dehydroquinase family. This sequence in the C-terminal section; belongs to the shikimate dehydrogenase family.

It carries out the reaction 3-dehydroquinate = 3-dehydroshikimate + H2O. The enzyme catalyses shikimate + NADP(+) = 3-dehydroshikimate + NADPH + H(+). Its pathway is metabolic intermediate biosynthesis; chorismate biosynthesis; chorismate from D-erythrose 4-phosphate and phosphoenolpyruvate: step 3/7. It functions in the pathway metabolic intermediate biosynthesis; chorismate biosynthesis; chorismate from D-erythrose 4-phosphate and phosphoenolpyruvate: step 4/7. Its function is as follows. Bifunctional enzyme that catalyzes two sequential steps of the aromatic amino acids biosynthetic pathway. In the first reaction, the AroD domain catalyzes the cis-dehydration of 3-dehydroquinate (DHQ) and introduces the first double bond of the aromatic ring to yield 3-dehydroshikimate; in the second reaction, the AroE domain catalyzes the reversible NADPH linked reduction of 3-dehydroshikimate (DHSA) to yield shikimate (SA). The protein is Shikimate biosynthesis protein AroDE of Chlamydia pneumoniae (Chlamydophila pneumoniae).